Here is a 297-residue protein sequence, read N- to C-terminus: Putative thiosulfate sulfurtransferase SseA (297 aa).

Rhodanese domains lie at 31-138 and 168-286; these read GAPG…ETTL and ILDA…VPIV. Cysteine 245 acts as the Cysteine persulfide intermediate in catalysis. Residue arginine 250 coordinates substrate.

It carries out the reaction thiosulfate + hydrogen cyanide = thiocyanate + sulfite + 2 H(+). This is Putative thiosulfate sulfurtransferase SseA (sseA) from Mycobacterium bovis (strain ATCC BAA-935 / AF2122/97).